The sequence spans 157 residues: 2-C-methyl-D-erythritol 2,4-cyclodiphosphate synthase (157 aa).

Positions 8 and 10 each coordinate a divalent metal cation. Residues 8–10 and 35–36 contribute to the 4-CDP-2-C-methyl-D-erythritol 2-phosphate site; these read DIH and HS. Histidine 43 contacts a divalent metal cation. Residues 57–59, 62–66, and lysine 142 contribute to the 4-CDP-2-C-methyl-D-erythritol 2-phosphate site; these read DIG and FPNND.

It belongs to the IspF family. In terms of assembly, homotrimer. A divalent metal cation is required as a cofactor.

The catalysed reaction is 4-CDP-2-C-methyl-D-erythritol 2-phosphate = 2-C-methyl-D-erythritol 2,4-cyclic diphosphate + CMP. It participates in isoprenoid biosynthesis; isopentenyl diphosphate biosynthesis via DXP pathway; isopentenyl diphosphate from 1-deoxy-D-xylulose 5-phosphate: step 4/6. Functionally, involved in the biosynthesis of isopentenyl diphosphate (IPP) and dimethylallyl diphosphate (DMAPP), two major building blocks of isoprenoid compounds. Catalyzes the conversion of 4-diphosphocytidyl-2-C-methyl-D-erythritol 2-phosphate (CDP-ME2P) to 2-C-methyl-D-erythritol 2,4-cyclodiphosphate (ME-CPP) with a corresponding release of cytidine 5-monophosphate (CMP). The chain is 2-C-methyl-D-erythritol 2,4-cyclodiphosphate synthase from Wigglesworthia glossinidia brevipalpis.